We begin with the raw amino-acid sequence, 355 residues long: Poly(3-hydroxyalkanoate) polymerase subunit PhaC (355 aa).

The 266-residue stretch at Pro69–Ile334 folds into the AB hydrolase-1 domain. Cys149 is a catalytic residue.

This sequence belongs to the PHA/PHB synthase family. Type III PhaC subfamily. In terms of assembly, a large complex of PhaC and PhaE; the ratio of the subunits has been estimated to be from 1:1 to 4:1, with more PhaE than PhaC.

The protein resides in the cytoplasm. It carries out the reaction (3R)-3-hydroxybutanoyl-CoA + [(3R)-hydroxybutanoate](n) = [(3R)-hydroxybutanoate](n+1) + CoA. It participates in biopolymer metabolism; poly-(R)-3-hydroxybutanoate biosynthesis. Polymerizes D(-)-3-hydroxybutyryl-CoA to create polyhydroxybutyrate (PHB) which consists of thousands of hydroxybutyrate molecules linked end to end. This subunit has catalytic activity that is enhanced 100-fold by PhaE, the non-catalytic subunit. The chain is Poly(3-hydroxyalkanoate) polymerase subunit PhaC from Allochromatium vinosum (strain ATCC 17899 / DSM 180 / NBRC 103801 / NCIMB 10441 / D) (Chromatium vinosum).